A 778-amino-acid polypeptide reads, in one-letter code: DEK domain-containing chromatin-associated protein 4 (778 aa).

Disordered regions lie at residues 1-334 (MGEE…RPVR) and 475-689 (LVNE…PSDE). Over residues 14–26 (ANGTSSLQKTSDA) the composition is skewed to polar residues. Basic and acidic residues-rich tracts occupy residues 40-95 (EVQE…PEAD), 121-153 (AVMKESVESADNKDAENPEGEQEKESKEEKLEG), 165-185 (EEKLVGGDKGDDVDEAEKVEN), and 209-243 (TNKGEEVKEANKEDDVEADTKVAEPEVEDKKTESK). A coiled-coil region spans residues 191–300 (KEEALKEKNE…KEDIKKSNKR (110 aa)). Residues 244–286 (DENEDKEEEKEDEKEESMDDKEDEKEESNDDDKEDEKEESNDD) show a composition bias toward acidic residues. Composition is skewed to basic and acidic residues over residues 287-296 (KEDKKEDIKK) and 303-323 (GKTEKTRGKTKSDEEKKDIEP). Positions 289 to 296 (DKKEDIKK) match the Nuclear localization signal 1 motif. Positions 489–496 (PKKSSPAA) match the Nuclear localization signal 2 motif. The span at 491-502 (KSSPAAGSSSSK) shows a compositional bias: low complexity. Residues 526–587 (DDESEEEKED…EESEEETKKK (62 aa)) adopt a coiled-coil conformation. Composition is skewed to acidic residues over residues 527–553 (DESEEEKEDDEEEEKEQEVEEEEEENE) and 560–582 (SEDEAPQLSESEENVESEEESEE). Positions 618 to 625 (PKKATQKR) match the Nuclear localization signal 3 motif. The span at 621-631 (ATQKRSAGKRK) shows a compositional bias: basic residues. A compositionally biased stretch (basic and acidic residues) spans 678 to 689 (KGKDKNKEPSDE). In terms of domain architecture, DEK-C spans 685–740 (EPSDEELKTAIIDILKGVDFNTATFTDILKRLDAKFNISLASKKSSIKRMIQDELT). 2 consecutive DNA-binding regions follow at residues 703 to 717 (DFNTATFTDILKRLD) and 732 to 736 (KRMIQ). Residues 732–766 (KRMIQDELTKLADEAEDEEGEEEDAEHEEEEEKEK) are a coiled coil. The disordered stretch occupies residues 741–778 (KLADEAEDEEGEEEDAEHEEEEEKEKAKGSGGGEEVKA). Positions 745-763 (EAEDEEGEEEDAEHEEEEE) are enriched in acidic residues. Basic and acidic residues predominate over residues 764–778 (KEKAKGSGGGEEVKA).

In terms of assembly, interacts with DEK3.

The protein localises to the nucleus. It is found in the nucleolus. Its function is as follows. Chromatin-associated protein which contributes to the modulation of chromatin structure (such as super-helical structure of DNA) and function. Binds to chromatin of protein-coding genes throughout the genome to regulate nucleosome occupancy and chromatin accessibility, and to modulate the expression of target genes. This is DEK domain-containing chromatin-associated protein 4 from Arabidopsis thaliana (Mouse-ear cress).